Here is a 152-residue protein sequence, read N- to C-terminus: Small ribosomal subunit protein uS19u (152 aa).

The protein belongs to the universal ribosomal protein uS19 family.

Its subcellular location is the cytoplasm. This Arabidopsis thaliana (Mouse-ear cress) protein is Small ribosomal subunit protein uS19u (RPS15A).